Here is a 124-residue protein sequence, read N- to C-terminus: Small ribosomal subunit protein eS6 (124 aa).

The protein belongs to the eukaryotic ribosomal protein eS6 family.

The sequence is that of Small ribosomal subunit protein eS6 from Methanococcus maripaludis (strain DSM 14266 / JCM 13030 / NBRC 101832 / S2 / LL).